We begin with the raw amino-acid sequence, 476 residues long: Aspartyl/glutamyl-tRNA(Asn/Gln) amidotransferase subunit B (476 aa).

Belongs to the GatB/GatE family. GatB subfamily. In terms of assembly, heterotrimer of A, B and C subunits.

It carries out the reaction L-glutamyl-tRNA(Gln) + L-glutamine + ATP + H2O = L-glutaminyl-tRNA(Gln) + L-glutamate + ADP + phosphate + H(+). The catalysed reaction is L-aspartyl-tRNA(Asn) + L-glutamine + ATP + H2O = L-asparaginyl-tRNA(Asn) + L-glutamate + ADP + phosphate + 2 H(+). In terms of biological role, allows the formation of correctly charged Asn-tRNA(Asn) or Gln-tRNA(Gln) through the transamidation of misacylated Asp-tRNA(Asn) or Glu-tRNA(Gln) in organisms which lack either or both of asparaginyl-tRNA or glutaminyl-tRNA synthetases. The reaction takes place in the presence of glutamine and ATP through an activated phospho-Asp-tRNA(Asn) or phospho-Glu-tRNA(Gln). This Variovorax paradoxus (strain S110) protein is Aspartyl/glutamyl-tRNA(Asn/Gln) amidotransferase subunit B.